Consider the following 194-residue polypeptide: MTVLLALDGVACIRGDRLVFEELSLALNRGDALWVRGPNGAGKSSLIRLAAGLLRPAAGRVVRRGRIALIDEAAALDSELPLRRALDFWARVDTVDGHAVDRAMDMMALNTLADVPVAMLSTGQRRRAAMVRVIASGAPIWLLDEPANGMDQAATARLVAAIATHRANGGAVLLASHFALAIPDLDELVMGVLA.

Residues 5 to 194 (LALDGVACIR…LDELVMGVLA (190 aa)) form the ABC transporter domain. 37–44 (GPNGAGKS) contributes to the ATP binding site.

Belongs to the ABC transporter superfamily. CcmA exporter (TC 3.A.1.107) family. The complex is composed of two ATP-binding proteins (CcmA) and two transmembrane proteins (CcmB).

The protein localises to the cell inner membrane. It catalyses the reaction heme b(in) + ATP + H2O = heme b(out) + ADP + phosphate + H(+). Functionally, part of the ABC transporter complex CcmAB involved in the biogenesis of c-type cytochromes; once thought to export heme, this seems not to be the case, but its exact role is uncertain. Responsible for energy coupling to the transport system. This is Cytochrome c biogenesis ATP-binding export protein CcmA from Sphingopyxis alaskensis (strain DSM 13593 / LMG 18877 / RB2256) (Sphingomonas alaskensis).